The following is a 361-amino-acid chain: Peptide chain release factor 1 (361 aa).

Q236 is modified (N5-methylglutamine).

It belongs to the prokaryotic/mitochondrial release factor family. In terms of processing, methylated by PrmC. Methylation increases the termination efficiency of RF1.

The protein resides in the cytoplasm. Its function is as follows. Peptide chain release factor 1 directs the termination of translation in response to the peptide chain termination codons UAG and UAA. This is Peptide chain release factor 1 from Lactobacillus delbrueckii subsp. bulgaricus (strain ATCC 11842 / DSM 20081 / BCRC 10696 / JCM 1002 / NBRC 13953 / NCIMB 11778 / NCTC 12712 / WDCM 00102 / Lb 14).